An 88-amino-acid polypeptide reads, in one-letter code: Small ribosomal subunit protein uS19 (88 aa).

This sequence belongs to the universal ribosomal protein uS19 family.

Its function is as follows. Protein S19 forms a complex with S13 that binds strongly to the 16S ribosomal RNA. The sequence is that of Small ribosomal subunit protein uS19 from Chlamydia felis (strain Fe/C-56) (Chlamydophila felis).